We begin with the raw amino-acid sequence, 138 residues long: MVVADANSGRAVYWGTGRRKNAVARVRLVPGTGQLTVNGKDGNLYFQFNPNYLGVIKAPLETLGLENEYDILVKAEGGGLTGQADSVRLGVARALCQLDPDNRPPLKTEGYLTRDPRAKERKKYGLHKARKAPQYSKR.

Positions 99 to 138 (DPDNRPPLKTEGYLTRDPRAKERKKYGLHKARKAPQYSKR) are disordered. Over residues 100–118 (PDNRPPLKTEGYLTRDPRA) the composition is skewed to basic and acidic residues. The span at 119–138 (KERKKYGLHKARKAPQYSKR) shows a compositional bias: basic residues.

This sequence belongs to the universal ribosomal protein uS9 family.

The polypeptide is Small ribosomal subunit protein uS9 (Nostoc punctiforme (strain ATCC 29133 / PCC 73102)).